The chain runs to 280 residues: Shikimate dehydrogenase (NADP(+)) (280 aa).

Shikimate contacts are provided by residues 19 to 21 and Thr66; that span reads SFS. The active-site Proton acceptor is the Lys70. Residue Glu82 participates in NADP(+) binding. Positions 91 and 106 each coordinate shikimate. NADP(+)-binding positions include 130-134 and Leu222; that span reads GSGGA. Tyr224 is a shikimate binding site. Residue Gly245 coordinates NADP(+).

It belongs to the shikimate dehydrogenase family. Homodimer.

The enzyme catalyses shikimate + NADP(+) = 3-dehydroshikimate + NADPH + H(+). The protein operates within metabolic intermediate biosynthesis; chorismate biosynthesis; chorismate from D-erythrose 4-phosphate and phosphoenolpyruvate: step 4/7. In terms of biological role, involved in the biosynthesis of the chorismate, which leads to the biosynthesis of aromatic amino acids. Catalyzes the reversible NADPH linked reduction of 3-dehydroshikimate (DHSA) to yield shikimate (SA). In Methanococcus maripaludis (strain C7 / ATCC BAA-1331), this protein is Shikimate dehydrogenase (NADP(+)).